Consider the following 489-residue polypeptide: Aspartate/glutamate permease AcaP (489 aa).

Helical transmembrane passes span 6–26 (IRWF…GNVV), 36–56 (VVTS…LIVG), 91–111 (VVHI…FGWV), 122–142 (MSMT…LWLS), 152–172 (IGGL…VMAI), 195–215 (IPKF…AVGG), 238–258 (FLLA…MGMI), 290–310 (LMIV…AFSI), 342–362 (GYTL…LGIG), 373–393 (NLNS…FIML), 413–433 (AMIA…LGMV), and 449–469 (LASN…LPFI).

It belongs to the amino acid-polyamine-organocation (APC) superfamily. Glutamate:GABA antiporter (GGA) (TC 2.A.3.7) family.

It is found in the cell membrane. Involved in aspartate and glutamate uptake. Plays no significant role in the excretion of accumulated glutamate. The chain is Aspartate/glutamate permease AcaP from Lactococcus lactis subsp. cremoris (strain MG1363).